Reading from the N-terminus, the 304-residue chain is Urease accessory protein UreD (304 aa).

This sequence belongs to the UreD family. UreD, UreF and UreG form a complex that acts as a GTP-hydrolysis-dependent molecular chaperone, activating the urease apoprotein by helping to assemble the nickel containing metallocenter of UreC. The UreE protein probably delivers the nickel.

The protein localises to the cytoplasm. Functionally, required for maturation of urease via the functional incorporation of the urease nickel metallocenter. The protein is Urease accessory protein UreD of Haloquadratum walsbyi (strain DSM 16790 / HBSQ001).